Consider the following 212-residue polypeptide: Adenylate kinase (212 aa).

10–15 (GAGKGT) is an ATP binding site. Residues 30–59 (STGDMFRAAMANQTEMGTLAKSFIDKGELV) form an NMP region. AMP-binding positions include Thr-31, Arg-36, 57–59 (ELV), 86–89 (GYPR), and Gln-93. Positions 127 to 159 (GRIINRKTGETYHKVFNPPADYNEDDYYQREDD) are LID. Residues Arg-128 and 137-138 (TY) each bind ATP. The AMP site is built by Arg-156 and Arg-167. Position 195 (Gln-195) interacts with ATP.

It belongs to the adenylate kinase family. As to quaternary structure, monomer.

The protein resides in the cytoplasm. The catalysed reaction is AMP + ATP = 2 ADP. It functions in the pathway purine metabolism; AMP biosynthesis via salvage pathway; AMP from ADP: step 1/1. Its function is as follows. Catalyzes the reversible transfer of the terminal phosphate group between ATP and AMP. Plays an important role in cellular energy homeostasis and in adenine nucleotide metabolism. This chain is Adenylate kinase, found in Streptococcus mutans serotype c (strain ATCC 700610 / UA159).